A 182-amino-acid chain; its full sequence is NADH-quinone oxidoreductase subunit B 2 (182 aa).

[4Fe-4S] cluster contacts are provided by Cys-47, Cys-48, Cys-113, and Cys-142.

Belongs to the complex I 20 kDa subunit family. NDH-1 is composed of 14 different subunits. Subunits NuoB, C, D, E, F, and G constitute the peripheral sector of the complex. [4Fe-4S] cluster serves as cofactor.

It localises to the cell inner membrane. It catalyses the reaction a quinone + NADH + 5 H(+)(in) = a quinol + NAD(+) + 4 H(+)(out). NDH-1 shuttles electrons from NADH, via FMN and iron-sulfur (Fe-S) centers, to quinones in the respiratory chain. The immediate electron acceptor for the enzyme in this species is believed to be ubiquinone. Couples the redox reaction to proton translocation (for every two electrons transferred, four hydrogen ions are translocated across the cytoplasmic membrane), and thus conserves the redox energy in a proton gradient. The chain is NADH-quinone oxidoreductase subunit B 2 from Anaeromyxobacter sp. (strain K).